Here is a 160-residue protein sequence, read N- to C-terminus: Small ribosomal subunit protein uS19 (160 aa).

The protein belongs to the universal ribosomal protein uS19 family.

Its function is as follows. Protein S19 forms a complex with S13 that binds strongly to the 16S ribosomal RNA. This is Small ribosomal subunit protein uS19 from Pyrobaculum islandicum (strain DSM 4184 / JCM 9189 / GEO3).